The following is a 1024-amino-acid chain: Non-canonical nonribosomal peptide synthetase FrzA (1024 aa).

The segment at 29-425 (RAQKSHQAIA…GRRDHQVKVR (397 aa)) is adenylation (A) domain. The region spanning 534–611 (NASQDVRSAL…ALTSIIKQRL (78 aa)) is the Carrier domain. At serine 571 the chain carries O-(pantetheine 4'-phosphoryl)serine. The Thioester reductase (TE) domain maps to 655–898 (LTGGTGFVGA…VPVDYVNAAI (244 aa)).

The protein belongs to the NRP synthetase family. The cofactor is pantetheine 4'-phosphate.

It catalyses the reaction L-tyrosinal + AMP + diphosphate + NADP(+) = L-tyrosine + ATP + NADPH + H(+). It participates in secondary metabolite biosynthesis. Its function is as follows. Non-canonical nonribosomal peptide synthetase; part of the gene cluster that mediates the biosynthesis of the alkaloid (-)-FR901483, a potent immunosuppressant that shows efficacy in animal models and a probable inhibitor of purine nucleotide biosynthesis by targeting phosphoribosylpyrophosphate amidotransferase (PPAT). Within the pathway, FrzA catalyzes the reduction of L-tyrosine via its C-terminal reductase domain to produce L-tyrosinal. The biosynthesis of (-)-FR901483 starts with the condensation of two L-tyrosines to yield (S,S)-dityrosyl-piperazine. This process occurs in 3 steps with the non-canonical nonribosomal peptide synthetase FrzA catalyzing the reduction of L-tyrosine into L-tyrosinal, the spontaneous condensation of 2 L-tyrosinal units, and the subsequent reduction by the NmrA-like family domain-containing oxidoreductase FrzB. The cytochrome P450 monooxygenase FrzC then performs coupling between N10 and C1' to morph the piperazine into a 1,4-diazabicyclo[3.2.1]octane spiro-fused to a 2,5-cyclohexadienone. The dienone portion is further reduced to cyclohexanone by the flavin-dependent reductase FrzD. The methyltranserases (MTs) FrzE and FrzF are then involved in the methylation at the C10' amine and the C4 phenolic oxygen, respectively. The order of the two MTs appear to be interchangeable. Cleavage of the C9-N10' bond by the dioxygenase FrzG then leads to formation of a conjugated iminium. In addition to the oxidation of C9, an additional dehydrogenation between C7 and C8 can occur to give a likely shunt product. The next biosynthetic step is the intramolecular aldol condensation catalyzed by the newly identified aldolase FrzH to yield an aza-tricyclic product with the formation of a C9-C3' bond. The short-chain dehydrogenase/reductase FrzI then produces dephospho-(-)-FR901483 that is phosphorylated at C4'-OH into (-)-FR901483 by the phosphotransferase FrzJ. This Cladobotryum sp protein is Non-canonical nonribosomal peptide synthetase FrzA.